The chain runs to 58 residues: Mitochondrial import receptor subunit TOM7 homolog (58 aa).

Residues 1–16 (MKLSPATKSFIGKTVD) are Cytoplasmic-facing. A helical transmembrane segment spans residues 17–35 (ISTFAIQWGFVPFVVYLGF). Residues 36–58 (KKGAEPMPNGQILPLSAMSLLWG) lie on the Mitochondrial intermembrane side of the membrane.

It belongs to the Tom7 family. As to quaternary structure, forms part of the preprotein translocase complex of the outer mitochondrial membrane (TOM complex).

The protein resides in the mitochondrion outer membrane. The chain is Mitochondrial import receptor subunit TOM7 homolog (tomm-7) from Caenorhabditis elegans.